The primary structure comprises 160 residues: H/ACA ribonucleoprotein complex subunit 2 (160 aa).

Phosphoserine is present on Ser-15. Position 23 is a phosphothreonine (Thr-23).

It belongs to the eukaryotic ribosomal protein eL8 family. In terms of assembly, component of the box H/ACA small nucleolar ribonucleoprotein (H/ACA snoRNP) complex consisting of Nop60B, Gar1, NPH2 and Nop10, and associated with H/ACA-type snoRNAs.

Its subcellular location is the nucleus. The protein localises to the nucleolus. Functionally, component of the box H/ACA small nucleolar ribonucleoprotein (H/ACA snoRNP) complex, which catalyzes pseudouridylation of rRNA. This involves the isomerization of uridine such that the ribose is subsequently attached to C5, instead of the normal N1. Pseudouridine ('psi') residues may serve to stabilize the conformation of rRNAs. Required for ribosome biogenesis. H/ACA snoRNP complex-dependent ribosome biogenesis is important in female germline cell differentiation during oogenesis. The chain is H/ACA ribonucleoprotein complex subunit 2 from Drosophila melanogaster (Fruit fly).